Reading from the N-terminus, the 103-residue chain is c-Myc-binding protein (103 aa).

The protein belongs to the AMY1 family. In terms of assembly, binds via its C-terminal region to the N-terminal region of MYC. Associates with AKAP1/S-AKAP84. Interacts with MYCBPAP. Interacts with CFAP91. Highly expressed in heart, placenta, pancreas, skeletal muscle and kidney. Also present at low levels in lung.

It localises to the cytoplasm. The protein resides in the nucleus. It is found in the mitochondrion. Functionally, may control the transcriptional activity of MYC. Stimulates the activation of E box-dependent transcription by MYC. This chain is c-Myc-binding protein, found in Homo sapiens (Human).